The following is a 109-amino-acid chain: Mitochondrial pyruvate carrier 1 (109 aa).

At Ala2 the chain carries N-acetylalanine. Topologically, residues 2–20 are mitochondrial matrix; it reads AGALVRKAADYVRSKDFRD. A helical membrane pass occupies residues 21 to 41; sequence YLMSTHFWGPVANWGLPIAAI. The Mother cell cytoplasmic portion of the chain corresponds to 42–52; sequence NDMKKSPEIIS. Residues 53-71 form a helical membrane-spanning segment; it reads GRMTFALCCYSLTFMRFAY. Residue Lys72 is modified to N6-acetyllysine. The Mitochondrial matrix segment spans residues 72-109; that stretch reads KVQPRNWLLFACHATNEVAQLIQGGRLIRHEMSKKASA.

Homodimer. Forms heterodimer with MPC2. The heterodimer is the more stable and dominant form.

The protein resides in the mitochondrion inner membrane. The enzyme catalyses pyruvate(out) + H(+)(out) = pyruvate(in) + H(+)(in). Its function is as follows. Mediates the uptake of pyruvate into mitochondria. The polypeptide is Mitochondrial pyruvate carrier 1 (MPC1) (Bos taurus (Bovine)).